The following is a 97-amino-acid chain: Large ribosomal subunit protein eL21 (97 aa).

The segment at 1–26 (MQKSEGFRSKTRYKLQKHPRQKGMAP) is disordered. Basic residues predominate over residues 9–21 (SKTRYKLQKHPRQ).

This sequence belongs to the eukaryotic ribosomal protein eL21 family.

This is Large ribosomal subunit protein eL21 from Methanococcus maripaludis (strain C5 / ATCC BAA-1333).